A 359-amino-acid chain; its full sequence is DNA-directed RNA polymerase RPB3-11 homolog (359 aa).

The protein in the N-terminal section; belongs to the archaeal RpoD/eukaryotic RPB3 RNA polymerase subunit family. In the C-terminal section; belongs to the archaeal RpoL/eukaryotic RPB11/RPC19 RNA polymerase subunit family. Part of the viral DNA-directed RNA polymerase that consists of 8 polII-like subunits (RPB1, RPB2, RPB3, RPB5, RPB6, RPB7, RPB9, RPB10), a capping enzyme and a termination factor.

The protein localises to the host cytoplasm. It localises to the virion. Component of the DNA-directed RNA polymerase (RNAP) that catalyzes the transcription in the cytoplasm of viral DNA into RNA using the four ribonucleoside triphosphates as substrates. The protein is DNA-directed RNA polymerase RPB3-11 homolog of Ornithodoros (relapsing fever ticks).